Consider the following 201-residue polypeptide: ATP synthase subunit delta, chloroplastic (201 aa).

It belongs to the ATPase delta chain family. In terms of assembly, F-type ATPases have 2 components, F(1) - the catalytic core - and F(0) - the membrane proton channel. F(1) has five subunits: alpha(3), beta(3), gamma(1), delta(1), epsilon(1). CF(0) has four main subunits: a(1), b(1), b'(1) and c(10-14). The alpha and beta chains form an alternating ring which encloses part of the gamma chain. F(1) is attached to F(0) by a central stalk formed by the gamma and epsilon chains, while a peripheral stalk is formed by the delta, b and b' chains.

The protein localises to the plastid. It localises to the chloroplast thylakoid membrane. Its function is as follows. F(1)F(0) ATP synthase produces ATP from ADP in the presence of a proton or sodium gradient. F-type ATPases consist of two structural domains, F(1) containing the extramembraneous catalytic core and F(0) containing the membrane proton channel, linked together by a central stalk and a peripheral stalk. During catalysis, ATP synthesis in the catalytic domain of F(1) is coupled via a rotary mechanism of the central stalk subunits to proton translocation. This protein is part of the stalk that links CF(0) to CF(1). It either transmits conformational changes from CF(0) to CF(1) or is implicated in proton conduction. In Vaucheria litorea (Yellow-green alga), this protein is ATP synthase subunit delta, chloroplastic.